The sequence spans 243 residues: Orotidine 5'-phosphate decarboxylase (243 aa).

Substrate contacts are provided by residues aspartate 18, lysine 39, 66 to 75 (DLKFHDIPTT), threonine 130, arginine 192, glutamine 201, glycine 221, and arginine 222. Lysine 68 acts as the Proton donor in catalysis.

It belongs to the OMP decarboxylase family. Type 1 subfamily. In terms of assembly, homodimer.

It catalyses the reaction orotidine 5'-phosphate + H(+) = UMP + CO2. It participates in pyrimidine metabolism; UMP biosynthesis via de novo pathway; UMP from orotate: step 2/2. Functionally, catalyzes the decarboxylation of orotidine 5'-monophosphate (OMP) to uridine 5'-monophosphate (UMP). The sequence is that of Orotidine 5'-phosphate decarboxylase from Synechococcus sp. (strain CC9311).